The chain runs to 666 residues: Non-receptor tyrosine-protein kinase TNK1 (666 aa).

Serine 96 is subject to Phosphoserine. The region spanning 116-383 is the Protein kinase domain; sequence VRRGELLGSG…LEGLLQEAWL (268 aa). ATP is bound by residues 122–130 and lysine 148; that span reads LGSGCFGVV. The Proton acceptor role is filled by aspartate 245. Phosphoserine is present on serine 255. The region spanning 381 to 441 is the SH3 domain; it reads AWLSEGRCVR…PASAVTLADL (61 aa). Residues 442 to 589 form a disordered region; it reads GGSPVTHPAH…VPSGGPLSDP (148 aa). Basic and acidic residues predominate over residues 457–473; that stretch reads HGEKCRGGTDGDREKAT. Serine 498 is modified (phosphoserine). The residue at position 510 (threonine 510) is a Phosphothreonine. Serine 515 bears the Phosphoserine mark. Over residues 531–544 the composition is skewed to pro residues; the sequence is DLPPRPPDLPPRPP. At serine 582 the chain carries Phosphoserine.

The protein belongs to the protein kinase superfamily. Tyr protein kinase family. In terms of assembly, interacts with the SH3 domain of PLCG1 via its Pro-rich domain. Autophosphorylated on tyrosine residues. In terms of tissue distribution, expressed in whole embryo and all adult tissues examined including liver, kidney, heart, brain, skeletal muscle and intestine. Also detected in various myeloid- and lymphoid-derived cell lines.

It localises to the membrane. The protein resides in the cytoplasm. It catalyses the reaction L-tyrosyl-[protein] + ATP = O-phospho-L-tyrosyl-[protein] + ADP + H(+). Its function is as follows. May function in signaling pathways utilized broadly during fetal development and more selectively in adult tissues and in cells of the lymphohematopoietic system. Could specifically be involved in phospholipid signal transduction. Involved in negative regulation of cell growth. Has tumor suppressor properties. Plays a negative regulatory role in the Ras-MAPK pathway. The chain is Non-receptor tyrosine-protein kinase TNK1 from Mus musculus (Mouse).